The primary structure comprises 321 residues: Gap junction delta-2 protein (321 aa).

At 1–19 (MGEWTILERLLEAAVQQHS) the chain is on the cytoplasmic side. A helical transmembrane segment spans residues 20–42 (TMIGRILLTVVVIFRILIVAIVG). The Extracellular portion of the chain corresponds to 43 to 75 (ETVYDDEQTMFVCNTLQPGCNQACYDRAFPISH). Residues 76–98 (IRYWVFQIIMVCTPSLCFITYSV) traverse the membrane as a helical segment. Residues 99-197 (HQSAKQRERR…KLRRQEGISR (99 aa)) lie on the Cytoplasmic side of the membrane. The segment at 118–141 (RDPPESIGGPGGTGGGGSGGGKRE) is disordered. Residues 125–137 (GGPGGTGGGGSGG) are compositionally biased toward gly residues. Residues 198–220 (FYIIQVVFRNALEIGFLVGQYFL) traverse the membrane as a helical segment. Topologically, residues 221–252 (YGFSVPGLYECNRYPCIKEVECYVSRPTEKTV) are extracellular. The chain crosses the membrane as a helical span at residues 253–275 (FLVFMFAVSGICVVLNLAELNHL). Topologically, residues 276–321 (GWRKIKLAVRGAQAKRKSIYEIRNKDLPRVSVPNFGRTQSSDSAYV) are cytoplasmic.

This sequence belongs to the connexin family. Delta-type subfamily. A connexon is composed of a hexamer of connexins. In terms of tissue distribution, highly expressed in neurons.

The protein resides in the cell membrane. It is found in the cell junction. Its subcellular location is the gap junction. In terms of biological role, one gap junction consists of a cluster of closely packed pairs of transmembrane channels, the connexons, through which materials of low MW diffuse from one cell to a neighboring cell. The chain is Gap junction delta-2 protein (GJD2) from Homo sapiens (Human).